We begin with the raw amino-acid sequence, 377 residues long: Succinyl-diaminopimelate desuccinylase (377 aa).

His-68 serves as a coordination point for Zn(2+). Residue Asp-70 is part of the active site. Residue Asp-101 coordinates Zn(2+). Glu-135 (proton acceptor) is an active-site residue. Zn(2+) contacts are provided by Glu-136, Glu-164, and His-350.

The protein belongs to the peptidase M20A family. DapE subfamily. As to quaternary structure, homodimer. Zn(2+) is required as a cofactor. Co(2+) serves as cofactor.

It catalyses the reaction N-succinyl-(2S,6S)-2,6-diaminopimelate + H2O = (2S,6S)-2,6-diaminopimelate + succinate. Its pathway is amino-acid biosynthesis; L-lysine biosynthesis via DAP pathway; LL-2,6-diaminopimelate from (S)-tetrahydrodipicolinate (succinylase route): step 3/3. Catalyzes the hydrolysis of N-succinyl-L,L-diaminopimelic acid (SDAP), forming succinate and LL-2,6-diaminopimelate (DAP), an intermediate involved in the bacterial biosynthesis of lysine and meso-diaminopimelic acid, an essential component of bacterial cell walls. The chain is Succinyl-diaminopimelate desuccinylase from Acinetobacter baumannii (strain AB307-0294).